A 396-amino-acid chain; its full sequence is Succinyl-CoA:mesaconate CoA-transferase (396 aa).

The Nucleophile role is filled by aspartate 175.

Belongs to the CoA-transferase III family.

The enzyme catalyses mesaconate + succinyl-CoA = 2-methylfumaryl-CoA + succinate. Its function is as follows. Involved in the methylaspartate cycle. Catalyzes the transfer of the CoA moiety from succinyl-CoA to mesaconate to generate mesaconyl-CoA (2-methylfumaryl-CoA) and succinate. This Haloarcula marismortui (strain ATCC 43049 / DSM 3752 / JCM 8966 / VKM B-1809) (Halobacterium marismortui) protein is Succinyl-CoA:mesaconate CoA-transferase.